The following is a 274-amino-acid chain: Major capsid protein (274 aa).

The protein localises to the virion. Its function is as follows. Assembles to form an icosahedral capsid. This is Major capsid protein from Staphylococcus phage phiMR11.